Reading from the N-terminus, the 158-residue chain is uncharacterized protein (158 aa).

Residues V33–V53 traverse the membrane as a helical segment.

The protein resides in the membrane. This is an uncharacterized protein from Saccharomyces cerevisiae (strain ATCC 204508 / S288c) (Baker's yeast).